The following is a 352-amino-acid chain: RNA demethylase ALKBH5 (352 aa).

Residues 18 to 34 (RDKVFEYSNGEKRKYRE) show a composition bias toward basic and acidic residues. Positions 18-47 (RDKVFEYSNGEKRKYRESDDDESEYEERRD) are disordered. Residue tyrosine 107 is part of the active site. Residues asparagine 161, tyrosine 163, and histidine 172 each contribute to the 2-oxoglutarate site. Histidine 172, aspartate 174, and histidine 234 together coordinate Fe cation. The cysteines at positions 198 and 235 are disulfide-linked. 2-oxoglutarate contacts are provided by histidine 234 and arginine 245. Residues 260 to 352 (LDSNSLSPSI…PTRRVKMRRH (93 aa)) are disordered. The segment covering 272–285 (PKRRHILKAKRSHR) has biased composition (basic residues). 2 stretches are compositionally biased toward basic and acidic residues: residues 286–306 (KADP…ELQR) and 315–343 (RHDD…DHAP).

This sequence belongs to the alkB family. Monomer. It depends on Fe(2+) as a cofactor.

The protein localises to the nucleus speckle. It carries out the reaction an N(6)-methyladenosine in mRNA + 2-oxoglutarate + O2 = an adenosine in mRNA + formaldehyde + succinate + CO2. In terms of biological role, dioxygenase that specifically demethylates N(6)-methyladenosine (m6A) RNA, the most prevalent internal modification of messenger RNA (mRNA) in higher eukaryotes. Demethylates RNA by oxidative demethylation, which requires molecular oxygen, alpha-ketoglutarate and iron. Demethylation of m6A mRNA affects mRNA processing, translation and export. This chain is RNA demethylase ALKBH5 (alkbh5), found in Danio rerio (Zebrafish).